Consider the following 855-residue polypeptide: DNA mismatch repair protein MutS (855 aa).

Residue 621 to 628 participates in ATP binding; sequence GPNMGGKS.

It belongs to the DNA mismatch repair MutS family.

Its function is as follows. This protein is involved in the repair of mismatches in DNA. It is possible that it carries out the mismatch recognition step. This protein has a weak ATPase activity. The polypeptide is DNA mismatch repair protein MutS (Francisella tularensis subsp. holarctica (strain OSU18)).